A 633-amino-acid chain; its full sequence is DNA repair protein XRCC1 (633 aa).

Ser140 is modified (phosphoserine). Lys176 is covalently cross-linked (Glycyl lysine isopeptide (Lys-Gly) (interchain with G-Cter in SUMO1); alternate). Lys176 is covalently cross-linked (Glycyl lysine isopeptide (Lys-Gly) (interchain with G-Cter in SUMO2); alternate). Thr198 bears the Phosphothreonine mark. Ser199 bears the Phosphoserine mark. Thr202 is subject to Phosphothreonine. Phosphoserine occurs at positions 204, 226, and 241. Residues 221-231 (AASSASPVSRA) are compositionally biased toward low complexity. Positions 221 to 313 (AASSASPVSR…TEPRRPRAGP (93 aa)) are disordered. The span at 240 to 257 (ESPKGKRKLDLNQEEKKT) shows a compositional bias: basic and acidic residues. Thr257 carries the phosphothreonine modification. A phosphoserine mark is found at Ser259 and Ser266. Residues 277-291 (APTRTPATAPVPARA) are compositionally biased toward low complexity. A Phosphothreonine modification is found at Thr281. Residues 299–313 (PRGEGTEPRRPRAGP) are compositionally biased toward basic and acidic residues. The 89-residue stretch at 315-403 (ELGKILQGVV…RRLPSQRYLM (89 aa)) folds into the BRCT 1 domain. Ser371 carries the post-translational modification Phosphoserine; by PRKDC. 3 disordered regions span residues 400–462 (RYLM…AASP), 471–490 (EGVQ…DTED), and 498–536 (QKEH…DLPV). Residues Ser408, Ser409, Ser410, and Ser421 each carry the phosphoserine modification. The segment covering 427–443 (KLPQKQPQTKTKPTQAA) has biased composition (low complexity). 2 positions are modified to phosphoserine: Ser446 and Ser447. A phosphothreonine mark is found at Thr453 and Thr457. Phosphoserine is present on residues Ser461 and Ser485. The span at 481–490 (GAEDSGDTED) shows a compositional bias: acidic residues. Thr488 is subject to Phosphothreonine. Ser518 carries the phosphoserine modification. 2 positions are modified to phosphothreonine: Thr519 and Thr523. Residues 538-629 (ELPDFFQGKH…KLLPHQLYGV (92 aa)) form the BRCT 2 domain.

Homodimer. Interacts with polynucleotide kinase (PNK), DNA polymerase-beta (POLB) and DNA ligase III (LIG3). Interacts with APTX and APLF. Interacts with APEX1; the interaction is induced by SIRT1 and increases with the acetylated form of APEX1. Interacts with (poly-ADP-ribosylated) PARP1. Post-translationally, phosphorylation of Ser-371 causes dimer dissociation. Phosphorylation by CK2 promotes interaction with APTX and APLF. Sumoylated. In terms of tissue distribution, expressed in fibroblasts, retinal pigmented epithelial cells and lymphoblastoid cells (at protein level).

It localises to the nucleus. The protein localises to the chromosome. In terms of biological role, scaffold protein involved in DNA single-strand break repair by mediating the assembly of DNA break repair protein complexes. Negatively regulates ADP-ribosyltransferase activity of PARP1 during base-excision repair in order to prevent excessive PARP1 activity. Recognizes and binds poly-ADP-ribose chains: specifically binds auto-poly-ADP-ribosylated PARP1, limiting its activity. The chain is DNA repair protein XRCC1 from Homo sapiens (Human).